We begin with the raw amino-acid sequence, 561 residues long: Phosphoinositide phospholipase C 1 (561 aa).

The EF-hand domain maps to Glu-21–Glu-54. Residues Gln-105–Lys-249 enclose the PI-PLC X-box domain. Active-site residues include His-120 and His-166. The span at Gln-256–Asp-266 shows a compositional bias: polar residues. Residues Gln-256 to Asp-285 form a disordered region. The span at Glu-267–Asp-276 shows a compositional bias: basic and acidic residues. The PI-PLC Y-box domain maps to Arg-294–Leu-410. The region spanning Pro-414–Asp-541 is the C2 domain. Asp-452, Asp-458, Asp-510, Asp-512, and Asp-518 together coordinate Ca(2+).

It depends on Ca(2+) as a cofactor. As to expression, expressed in stems, leaves, roots, flowers and siliques. Predominant in the vascular tissues of roots and leaves.

It localises to the cell membrane. It carries out the reaction a 1,2-diacyl-sn-glycero-3-phospho-(1D-myo-inositol-4,5-bisphosphate) + H2O = 1D-myo-inositol 1,4,5-trisphosphate + a 1,2-diacyl-sn-glycerol + H(+). In terms of biological role, the production of the second messenger molecules diacylglycerol (DAG) and inositol 1,4,5-trisphosphate (IP3) is mediated by activated phosphatidylinositol-specific phospholipase C enzymes. Required for secondary responses to abscisic acid signals. The chain is Phosphoinositide phospholipase C 1 (PLC1) from Arabidopsis thaliana (Mouse-ear cress).